The following is a 79-amino-acid chain: Translational regulator CsrA (79 aa).

The protein belongs to the CsrA/RsmA family. Homodimer; the beta-strands of each monomer intercalate to form a hydrophobic core, while the alpha-helices form wings that extend away from the core.

It localises to the cytoplasm. In terms of biological role, a translational regulator that binds mRNA to regulate translation initiation and/or mRNA stability. Usually binds in the 5'-UTR at or near the Shine-Dalgarno sequence preventing ribosome-binding, thus repressing translation. Its main target seems to be the major flagellin gene, while its function is anatagonized by FliW. The sequence is that of Translational regulator CsrA from Maridesulfovibrio salexigens (strain ATCC 14822 / DSM 2638 / NCIMB 8403 / VKM B-1763) (Desulfovibrio salexigens).